The sequence spans 310 residues: p-hydroxybenzoic acid efflux pump subunit AaeA (310 aa).

A helical transmembrane segment spans residues 12–32; sequence AITLVLVILAFIAIFRAWVYY.

The protein belongs to the membrane fusion protein (MFP) (TC 8.A.1) family.

The protein localises to the cell inner membrane. In terms of biological role, forms an efflux pump with AaeB. This Salmonella schwarzengrund (strain CVM19633) protein is p-hydroxybenzoic acid efflux pump subunit AaeA.